Consider the following 154-residue polypeptide: Nascent polypeptide-associated complex subunit beta (154 aa).

The region spanning glutamate 34–isoleucine 99 is the NAC-A/B domain. The interval lysine 125–glutamate 154 is disordered.

This sequence belongs to the NAC-beta family. Part of the nascent polypeptide-associated complex (NAC), consisting of EGD2 and EGD1. NAC associates with ribosomes via EGD1.

Its subcellular location is the cytoplasm. The protein localises to the nucleus. In terms of biological role, component of the nascent polypeptide-associated complex (NAC), a dynamic component of the ribosomal exit tunnel, protecting the emerging polypeptides from interaction with other cytoplasmic proteins to ensure appropriate nascent protein targeting. The NAC complex also promotes mitochondrial protein import by enhancing productive ribosome interactions with the outer mitochondrial membrane and blocks the inappropriate interaction of ribosomes translating non-secretory nascent polypeptides with translocation sites in the membrane of the endoplasmic reticulum. EGD1 may act as a transcription factor that exert a negative effect on the expression of several genes that are transcribed by RNA polymerase II. The polypeptide is Nascent polypeptide-associated complex subunit beta (EGD1) (Debaryomyces hansenii (strain ATCC 36239 / CBS 767 / BCRC 21394 / JCM 1990 / NBRC 0083 / IGC 2968) (Yeast)).